Reading from the N-terminus, the 316-residue chain is uncharacterized protein (316 aa).

Belongs to the chlamydial CPn_0441/CT_007/TC_0275 family.

This is an uncharacterized protein from Chlamydia pneumoniae (Chlamydophila pneumoniae).